The primary structure comprises 451 residues: Phosphoglucosamine mutase (451 aa).

Ser107 functions as the Phosphoserine intermediate in the catalytic mechanism. Mg(2+) contacts are provided by Ser107, Asp246, Asp248, and Asp250. Ser107 bears the Phosphoserine mark.

This sequence belongs to the phosphohexose mutase family. Mg(2+) serves as cofactor. Activated by phosphorylation.

The catalysed reaction is alpha-D-glucosamine 1-phosphate = D-glucosamine 6-phosphate. In terms of biological role, catalyzes the conversion of glucosamine-6-phosphate to glucosamine-1-phosphate. The sequence is that of Phosphoglucosamine mutase from Burkholderia ambifaria (strain ATCC BAA-244 / DSM 16087 / CCUG 44356 / LMG 19182 / AMMD) (Burkholderia cepacia (strain AMMD)).